A 100-amino-acid chain; its full sequence is Small ribosomal subunit protein uS14 (100 aa).

It belongs to the universal ribosomal protein uS14 family. As to quaternary structure, part of the 30S ribosomal subunit. Contacts proteins S3 and S10.

In terms of biological role, binds 16S rRNA, required for the assembly of 30S particles and may also be responsible for determining the conformation of the 16S rRNA at the A site. This is Small ribosomal subunit protein uS14 from Synechococcus sp. (strain CC9311).